A 135-amino-acid chain; its full sequence is Large ribosomal subunit protein uL16c (135 aa).

Belongs to the universal ribosomal protein uL16 family. In terms of assembly, part of the 50S ribosomal subunit.

Its subcellular location is the plastid. The protein resides in the chloroplast. This Nandina domestica (Heavenly bamboo) protein is Large ribosomal subunit protein uL16c.